Here is a 267-residue protein sequence, read N- to C-terminus: Tryptophan synthase alpha chain (267 aa).

Residues Glu49 and Asp60 each act as proton acceptor in the active site.

It belongs to the TrpA family. As to quaternary structure, tetramer of two alpha and two beta chains.

It catalyses the reaction (1S,2R)-1-C-(indol-3-yl)glycerol 3-phosphate + L-serine = D-glyceraldehyde 3-phosphate + L-tryptophan + H2O. The protein operates within amino-acid biosynthesis; L-tryptophan biosynthesis; L-tryptophan from chorismate: step 5/5. Its function is as follows. The alpha subunit is responsible for the aldol cleavage of indoleglycerol phosphate to indole and glyceraldehyde 3-phosphate. The protein is Tryptophan synthase alpha chain of Solibacter usitatus (strain Ellin6076).